Here is a 288-residue protein sequence, read N- to C-terminus: uncharacterized protein (288 aa).

Positions 1 to 27 are cleaved as a signal peptide; it reads MKFEFRTLVLISLAVVVVLSGCSQSPS. Residues 144 to 167 are disordered; it reads GESGEAGGAGEQLPASDQASGEEP.

This is an uncharacterized protein from Archaeoglobus fulgidus (strain ATCC 49558 / DSM 4304 / JCM 9628 / NBRC 100126 / VC-16).